The following is a 201-amino-acid chain: Large ribosomal subunit protein uL4 (201 aa).

The segment at 45 to 71 (AQKTRAEVTGSGKKPWRQKGTGRARAG) is disordered.

It belongs to the universal ribosomal protein uL4 family. Part of the 50S ribosomal subunit.

Its function is as follows. One of the primary rRNA binding proteins, this protein initially binds near the 5'-end of the 23S rRNA. It is important during the early stages of 50S assembly. It makes multiple contacts with different domains of the 23S rRNA in the assembled 50S subunit and ribosome. In terms of biological role, forms part of the polypeptide exit tunnel. This Shewanella halifaxensis (strain HAW-EB4) protein is Large ribosomal subunit protein uL4.